Reading from the N-terminus, the 336-residue chain is Probable G-protein coupled receptor 160 (336 aa).

Residues methionine 1 to serine 21 are Extracellular-facing. Residue asparagine 8 is glycosylated (N-linked (GlcNAc...) asparagine). A helical membrane pass occupies residues leucine 22–isoleucine 42. Residues leucine 43 to glutamate 56 lie on the Cytoplasmic side of the membrane. The chain crosses the membrane as a helical span at residues tyrosine 57 to threonine 77. Over tyrosine 78–cysteine 95 the chain is Extracellular. A helical transmembrane segment spans residues leucine 96 to alanine 116. The Cytoplasmic portion of the chain corresponds to cysteine 117–lysine 136. The chain crosses the membrane as a helical span at residues leucine 137–aspartate 157. At proline 158 to leucine 187 the chain is on the extracellular side. The chain crosses the membrane as a helical span at residues serine 188 to isoleucine 208. Residues glutamine 209–arginine 243 are Cytoplasmic-facing. The chain crosses the membrane as a helical span at residues leucine 244–serine 264. The Extracellular segment spans residues leucine 265–tyrosine 272. A helical membrane pass occupies residues isoleucine 273–tryptophan 293. Residues phenylalanine 294 to cysteine 336 are Cytoplasmic-facing.

It belongs to the G-protein coupled receptor 1 family.

The protein localises to the cell membrane. In terms of biological role, orphan receptor. The polypeptide is Probable G-protein coupled receptor 160 (Gpr160) (Rattus norvegicus (Rat)).